A 400-amino-acid chain; its full sequence is Zinc finger protein 514 (400 aa).

The KRAB domain occupies 1 to 72 (MTFEDVAVEF…EREISTGAHS (72 aa)). 7 consecutive C2H2-type zinc fingers follow at residues 204–226 (CKCN…QRCH), 232–254 (YECS…QRTH), 260–282 (YECS…YRFH), 288–310 (YKCN…QRTH), 316–338 (YECR…YRFH), 344–366 (YKCN…YRFH), and 372–394 (YKCN…QRSH).

It belongs to the krueppel C2H2-type zinc-finger protein family.

The protein resides in the nucleus. Functionally, may be involved in transcriptional regulation. This Homo sapiens (Human) protein is Zinc finger protein 514 (ZNF514).